The following is a 641-amino-acid chain: Methionine--tRNA ligase (641 aa).

The 'HIGH' region signature appears at 13–23; the sequence is YYPSAKLHIGN. Zn(2+)-binding residues include C128, C131, C145, and C148. Residues 298–302 carry the 'KMSKS' region motif; sequence KMSKS. Residue K301 participates in ATP binding. The 103-residue stretch at 539-641 folds into the tRNA-binding domain; sequence DFDKIDLRVV…GELPTGSQVR (103 aa).

It belongs to the class-I aminoacyl-tRNA synthetase family. MetG type 2A subfamily. As to quaternary structure, homodimer. The cofactor is Zn(2+).

It localises to the cytoplasm. It catalyses the reaction tRNA(Met) + L-methionine + ATP = L-methionyl-tRNA(Met) + AMP + diphosphate. In terms of biological role, is required not only for elongation of protein synthesis but also for the initiation of all mRNA translation through initiator tRNA(fMet) aminoacylation. This Clostridium tetani (strain Massachusetts / E88) protein is Methionine--tRNA ligase.